The primary structure comprises 638 residues: Leucine-rich repeat-containing protein 63 (638 aa).

Disordered regions lie at residues 220 to 241 (VPST…PSAA) and 306 to 325 (TTAA…TVQR). 6 LRR repeats span residues 389-412 (AFQL…ILYL), 413-435 (QNLQ…IHLL), 437-458 (YLRI…LFCL), 460-481 (YLEE…IQKL), 482-504 (RSLE…ILKL), and 532-556 (LTQI…VRKS).

This Mus musculus (Mouse) protein is Leucine-rich repeat-containing protein 63.